Consider the following 326-residue polypeptide: Beta-ketoacyl-[acyl-carrier-protein] synthase III (326 aa).

Residues Cys112 and His251 contribute to the active site. Residues 252–256 form an ACP-binding region; that stretch reads QANSR. Asn281 is a catalytic residue.

Belongs to the thiolase-like superfamily. FabH family. Homodimer.

The protein resides in the cytoplasm. The catalysed reaction is malonyl-[ACP] + acetyl-CoA + H(+) = 3-oxobutanoyl-[ACP] + CO2 + CoA. Its pathway is lipid metabolism; fatty acid biosynthesis. Functionally, catalyzes the condensation reaction of fatty acid synthesis by the addition to an acyl acceptor of two carbons from malonyl-ACP. Catalyzes the first condensation reaction which initiates fatty acid synthesis and may therefore play a role in governing the total rate of fatty acid production. Possesses both acetoacetyl-ACP synthase and acetyl transacylase activities. Its substrate specificity determines the biosynthesis of branched-chain and/or straight-chain of fatty acids. The chain is Beta-ketoacyl-[acyl-carrier-protein] synthase III from Clostridium botulinum (strain Langeland / NCTC 10281 / Type F).